A 175-amino-acid chain; its full sequence is Viral interleukin-10 homolog (175 aa).

A signal peptide spans 1–19 (MLSVMVSSSLVLIVFFLGA). 2 disulfide bridges follow: cysteine 37-cysteine 127 and cysteine 81-cysteine 132. Residue asparagine 151 is glycosylated (N-linked (GlcNAc...) asparagine; by host).

This sequence belongs to the IL-10 family. As to quaternary structure, homodimer; disulfide-linked.

It is found in the secreted. Its function is as follows. Functional viral IL-10 homolog. Can bind to the human IL-10 receptor and compete with human IL-10 for binding sites. Requires both subunits of the human IL-10 receptor complex to induce signal transduction events and biological activities. IL-10 signaling pathway has several immunosuppressive activities that are exploited by the virus. Inhibits TLR-induced type I interferon production in host plasmacytoid dendritic cells. The polypeptide is Viral interleukin-10 homolog (UL111A) (Human cytomegalovirus (strain AD169) (HHV-5)).